The sequence spans 121 residues: Large ribosomal subunit protein bL20 (121 aa).

This sequence belongs to the bacterial ribosomal protein bL20 family.

Functionally, binds directly to 23S ribosomal RNA and is necessary for the in vitro assembly process of the 50S ribosomal subunit. It is not involved in the protein synthesizing functions of that subunit. The sequence is that of Large ribosomal subunit protein bL20 from Francisella tularensis subsp. mediasiatica (strain FSC147).